Consider the following 327-residue polypeptide: Guanine nucleotide-binding protein subunit beta-like protein 1 (327 aa).

WD repeat units follow at residues 16–54 (LRGT…IWSL), 58–97 (RAVT…LWDL), 103–145 (AVVD…ILEM), 153–195 (ALKP…LWDV), 200–237 (VCSR…VWSL), 242–282 (ALQV…VFHW), and 286–323 (QPLA…LWSL).

In terms of tissue distribution, ubiquitous. Highly expressed in heart, liver, skeletal muscle, kidney, spleen, thymus and pancreas. Detected at low levels in lung, placenta and brain.

The protein resides in the cytoplasm. Its subcellular location is the nucleus. Its function is as follows. Acts as a critical regulator of DNA damage response (DDR) signaling via specifically regulating phosphatidylinositol 3-kinase-related protein kinase (PIKK) family proteins. In Homo sapiens (Human), this protein is Guanine nucleotide-binding protein subunit beta-like protein 1.